Reading from the N-terminus, the 677-residue chain is WD and tetratricopeptide repeats protein 1 (677 aa).

5 WD repeats span residues 45–84 (GHSG…KLLS), 88–129 (GHTA…TIHM), 132–172 (DHTN…KHSE), 182–222 (GPMV…NHRK), and 265–305 (RLRV…RPYT). S352 carries the post-translational modification Phosphoserine. 2 TPR repeats span residues 361–394 (LERV…APHN) and 396–431 (MLYG…NPCH). A disordered region spans residues 489–509 (EEKKAAGGGGGPVRLRSTSRK). S511 is modified (phosphoserine). WD repeat units lie at residues 535–575 (NTTT…LVRV) and 578–617 (GDES…EDLT). Residues 655–677 (SSGGAGASDDEDSAEGQVQCRPS) are disordered.

It functions in the pathway protein modification; protein ubiquitination. May function as a substrate receptor for CUL4-DDB1 E3 ubiquitin-protein ligase complex. The polypeptide is WD and tetratricopeptide repeats protein 1 (Wdtc1) (Mus musculus (Mouse)).